Here is a 379-residue protein sequence, read N- to C-terminus: Subtilisin Carlsberg (379 aa).

A signal peptide spans 1–29 (MMRKKSFWLGMLTAFMLVFTMAFSDSASA). The propeptide occupies 30-105 (AQPAKNVEKD…VEEDHVAHAL (76 aa)). The Inhibitor I9 domain maps to 44-102 (FKSGVKTASVKKDIIKESGGKVDKQFRIINAAKAKLDKEALKEVKNDPDVAYVEEDHVA). Position 107 (Q107) interacts with Ca(2+). One can recognise a Peptidase S8 domain in the interval 110 to 378 (PYGIPLIKAD…KGLINVEAAA (269 aa)). The active-site Charge relay system is D137. A Ca(2+)-binding site is contributed by D146. H168 (charge relay system) is an active-site residue. Residues L179, N181, T183, V185, A273, Y275, and V278 each contribute to the Ca(2+) site. Residue S325 is the Charge relay system of the active site.

It belongs to the peptidase S8 family. Ca(2+) is required as a cofactor.

It localises to the secreted. The catalysed reaction is Hydrolysis of proteins with broad specificity for peptide bonds, and a preference for a large uncharged residue in P1. Hydrolyzes peptide amides.. Its activity is regulated as follows. Inhibited by p-chlorophenyl and 1-naphthyl boronic acid derivatives. Its function is as follows. Subtilisin is an extracellular alkaline serine protease, it catalyzes the hydrolysis of proteins and peptide amides. Shows high specificity for aromatic and hydrophobic amino acids in the P1 substrate position. May play an important role in the degradation of feather keratin. The polypeptide is Subtilisin Carlsberg (Bacillus licheniformis).